The primary structure comprises 921 residues: Collagen alpha-1(IX) chain (921 aa).

The N-terminal stretch at 1–23 is a signal peptide; the sequence is MKTCWKIPVFFFVCSFLEPWASA. The tract at residues 24-268 is nonhelical region (NC4); that stretch reads AVKRRPRFPV…ITPSQTTDER (245 aa). Intrachain disulfides connect Cys-44–Cys-242 and Cys-198–Cys-252. Residues 50–244 form the Laminin G-like domain; sequence GQDDLPGFDL…LQWMLIHCDP (195 aa). Asn-171 carries an N-linked (GlcNAc...) asparagine glycan. Zn(2+) contacts are provided by Asp-213, Asp-215, and His-253. Disordered stretches follow at residues 254-759 and 783-905; these read ELPA…APTD and RPDS…EPAS. 8 consecutive Collagen-like domains span residues 269-324, 325-356, 358-403, 416-472, 473-516, 587-643, 655-712, and 713-755; these read GPPG…TPGA, DGLT…GFPG, GIPG…GTIG, PPGR…GLRG, ITGI…AGPK, EKGS…GKLG, GPPG…GEPG, and LRGP…PPGR. A triple-helical region (COL3) region spans residues 269-405; sequence GPPGEQGPPG…PGPRGTIGFH (137 aa). Pro residues-rich tracts occupy residues 273–285 and 298–307; these read EQGP…PPGV and KGPPGPPGPA. The span at 368-383 shows a compositional bias: low complexity; that stretch reads TAGLPGELGRVGPVGD. Positions 387 to 398 are enriched in pro residues; that stretch reads RGPPGPPGPPGP. Positions 406 to 417 are nonhelical region (NC3); sequence DGDPLCPNACPP. The interval 418–756 is triple-helical region (COL2); sequence GRSGYPGLPG…PGVQGPPGRA (339 aa). Over residues 479–489 the composition is skewed to basic and acidic residues; the sequence is DKGEKGARGLD. 2 stretches are compositionally biased toward low complexity: residues 602-621 and 630-650; these read NSGK…RGPQ and LGPV…SPGL. The segment at 757–786 is nonhelical region (NC2); that stretch reads PTDQHIKQVCMRVIQEHFAEMAASLKRPDS. Residues 787-901 form a triple-helical region (COL1) region; the sequence is GATGLPGRPG…PGPPGLPGFC (115 aa). Collagen-like domains lie at 790 to 847 and 848 to 899; these read GLPG…GPPG and RGPN…GLPG. Residues 794-804 are compositionally biased toward pro residues; the sequence is RPGPPGPPGPP. Residues 833–845 show a composition bias toward basic and acidic residues; sequence PKGDLGEKGERGP. The span at 888-897 shows a compositional bias: pro residues; the sequence is VPGPPGPPGL. Positions 902–921 are nonhelical region (NC1); it reads EPASCTMQAGQRAFNKGPDP.

The protein belongs to the fibril-associated collagens with interrupted helices (FACIT) family. In terms of assembly, heterotrimer of an alpha 1(IX), an alpha 2(IX) and an alpha 3(IX) chain. Post-translationally, covalently linked to the telopeptides of type II collagen by lysine-derived cross-links. In terms of processing, prolines at the third position of the tripeptide repeating unit (G-X-Y) are hydroxylated in some or all of the chains.

Its subcellular location is the secreted. The protein resides in the extracellular space. It is found in the extracellular matrix. Structural component of hyaline cartilage and vitreous of the eye. This Homo sapiens (Human) protein is Collagen alpha-1(IX) chain (COL9A1).